A 377-amino-acid chain; its full sequence is tRNA-specific 2-thiouridylase MnmA (377 aa).

ATP contacts are provided by residues 8-15 and Met34; that span reads GMSGGVDS. An interaction with target base in tRNA region spans residues 94–96; the sequence is NPD. Cys99 (nucleophile) is an active-site residue. Cysteines 99 and 201 form a disulfide. Gly123 is a binding site for ATP. The tract at residues 151 to 153 is interaction with tRNA; the sequence is KDQ. The active-site Cysteine persulfide intermediate is the Cys201. The interaction with tRNA stretch occupies residues 315–316; that stretch reads RY.

It belongs to the MnmA/TRMU family.

The protein resides in the cytoplasm. The enzyme catalyses S-sulfanyl-L-cysteinyl-[protein] + uridine(34) in tRNA + AH2 + ATP = 2-thiouridine(34) in tRNA + L-cysteinyl-[protein] + A + AMP + diphosphate + H(+). Its function is as follows. Catalyzes the 2-thiolation of uridine at the wobble position (U34) of tRNA, leading to the formation of s(2)U34. This Acinetobacter baylyi (strain ATCC 33305 / BD413 / ADP1) protein is tRNA-specific 2-thiouridylase MnmA.